We begin with the raw amino-acid sequence, 185 residues long: MIEASKLRAGMTFESEGKLIRVLEASHHKPGKGNTIMRMKLRDVRTGSTFDTTYRPDEKFEQAIIETVPAQYLYKMDDTAYFMNTETYDQYEIPVVNVEQELLYILENSDVKIQFYGSEVIGVTVPTTVELTVTETQPSIKGATVTGSGKPATLETGLVVNVPDFIEAGQKLVINTAEGTYVSRA.

The protein belongs to the elongation factor P family.

The protein localises to the cytoplasm. It participates in protein biosynthesis; polypeptide chain elongation. In terms of biological role, involved in peptide bond synthesis. Stimulates efficient translation and peptide-bond synthesis on native or reconstituted 70S ribosomes in vitro. Probably functions indirectly by altering the affinity of the ribosome for aminoacyl-tRNA, thus increasing their reactivity as acceptors for peptidyl transferase. The polypeptide is Elongation factor P (Streptococcus uberis (strain ATCC BAA-854 / 0140J)).